The sequence spans 377 residues: Sodium-dependent organic anion transporter (377 aa).

The Extracellular portion of the chain corresponds to 1-29; that stretch reads MRANCSSGLACPANSSEEELPEGLKAFGN. Asn-4 carries an N-linked (GlcNAc...) asparagine glycan. Residues 30–50 traverse the membrane as a helical segment; sequence LDLVFTVVSALMIGLLMFSLG. The Cytoplasmic portion of the chain corresponds to 51–67; sequence CSVEVQKLWGHIRRPWG. The helical transmembrane segment at 68–88 threads the bilayer; that stretch reads IAVGMLCQFGLMPLIAYLLII. Topologically, residues 89-97 are extracellular; sequence SFSLKPLQA. A helical membrane pass occupies residues 98-118; that stretch reads IAVLIMGCCPGGTVSNIFTFW. The Cytoplasmic segment spans residues 119–133; sequence VDGDMDLSISMTTCS. The chain crosses the membrane as a helical span at residues 134 to 154; sequence TMAALGMMPLCLYLYTLSWNL. Over 155–159 the chain is Extracellular; sequence EQNLT. An N-linked (GlcNAc...) asparagine glycan is attached at Asn-157. The helical transmembrane segment at 160-180 threads the bilayer; sequence IPYQNIGITLVCLIIPVAFGI. The Cytoplasmic segment spans residues 181–195; sequence YVNYRWPKQSKIILK. Residues 196-216 form a helical membrane-spanning segment; sequence IGAIAGGLLFLVVTGAGMVLM. The Extracellular segment spans residues 217-223; it reads KEFWSSD. Residues 224-244 traverse the membrane as a helical segment; sequence IILLMISFIFPLIGHATGFLL. Topologically, residues 245 to 257 are cytoplasmic; sequence ALLTHQSWQRCRT. The helical transmembrane segment at 258-278 threads the bilayer; sequence ISLETGTQNVQMCFTMLQLSF. The Extracellular portion of the chain corresponds to 279–285; it reads TAEQLVQ. A helical membrane pass occupies residues 286-306; that stretch reads IFGFVLAYGLFQMLNGFFMVA. The Cytoplasmic segment spans residues 307–377; the sequence is AYKMYKRRLK…TPTGDIARAK (71 aa). Residues 319 to 377 form a disordered region; it reads HGNEKPSCQEARHRKKSTSPKETTAFLEVNEEATLSPGPSGPVDPHGAPTPTGDIARAK.

The protein belongs to the bile acid:sodium symporter (BASS) (TC 2.A.28) family. Glycosylated.

It localises to the membrane. It catalyses the reaction estrone 3-sulfate(out) + 2 Na(+)(out) = estrone 3-sulfate(in) + 2 Na(+)(in). The catalysed reaction is 17beta-estradiol 3-sulfate(out) + 2 Na(+)(out) = 17beta-estradiol 3-sulfate(in) + 2 Na(+)(in). The enzyme catalyses dehydroepiandrosterone 3-sulfate(out) + 2 Na(+)(out) = dehydroepiandrosterone 3-sulfate(in) + 2 Na(+)(in). It carries out the reaction androst-5-ene-diol 3-sulfate(out) + 2 Na(+)(out) = androst-5-ene-diol 3-sulfate(in) + 2 Na(+)(in). It catalyses the reaction pregnenolone sulfate(out) + 2 Na(+)(out) = pregnenolone sulfate(in) + 2 Na(+)(in). The catalysed reaction is taurolithocholate 3-sulfate(out) + 2 Na(+)(out) = taurolithocholate 3-sulfate(in) + 2 Na(+)(in). The enzyme catalyses androsterone 3alpha-sulfate(out) + 2 Na(+)(out) = androsterone 3alpha-sulfate(in) + 2 Na(+)(in). It carries out the reaction 5alpha-dihydrotestosterone sulfate(out) + 2 Na(+)(out) = 5alpha-dihydrotestosterone sulfate(in) + 2 Na(+)(in). It catalyses the reaction 17beta-estradiol 17-sulfate(out) + 2 Na(+)(out) = 17beta-estradiol 17-sulfate(in) + 2 Na(+)(in). The catalysed reaction is 17alpha-hydroxypregnenolone 3-sulfate(out) + 2 Na(+)(out) = 17alpha-hydroxypregnenolone 3-sulfate(in) + 2 Na(+)(in). The enzyme catalyses epiandrosterone 3-sulfate(out) + 2 Na(+)(out) = epiandrosterone 3-sulfate(in) + 2 Na(+)(in). It carries out the reaction epitestosterone 17-sulfate(out) + 2 Na(+)(out) = epitestosterone 17-sulfate(in) + 2 Na(+)(in). It catalyses the reaction testosterone 17-sulfate(out) + 2 Na(+)(out) = testosterone 17-sulfate(in) + 2 Na(+)(in). The catalysed reaction is 16alpha-hydroxydehydroepiandrosterone 3-sulfate(out) + 2 Na(+)(out) = 16alpha-hydroxydehydroepiandrosterone 3-sulfate(in) + 2 Na(+)(in). In terms of biological role, transports sulfoconjugated steroid hormones from the extracellular compartment into the cytosol in a sodium-dependent manner without hydrolysis. Steroid sulfate hormones are commonly considered to be biologically inactive metabolites, that may be activated by steroid sulfatases into free steroids. May play an important role by delivering sulfoconjugated steroids to specific target cells in reproductive organs. May play a role transporting the estriol precursor 16alpha-hydroxydehydroepiandrosterone 3-sulfate (16a-OH-DHEAS) at the fetal blood vessel endothelium. Can also transport other sulfoconjugated molecules such as taurolithocholic acid-3-sulfate and sulfoconjugated pyrenes. This Bos taurus (Bovine) protein is Sodium-dependent organic anion transporter (SLC10A6).